The sequence spans 111 residues: Pyrimidine/purine nucleoside phosphorylase 1 (111 aa).

The protein belongs to the nucleoside phosphorylase PpnP family.

The enzyme catalyses a purine D-ribonucleoside + phosphate = a purine nucleobase + alpha-D-ribose 1-phosphate. The catalysed reaction is adenosine + phosphate = alpha-D-ribose 1-phosphate + adenine. It carries out the reaction cytidine + phosphate = cytosine + alpha-D-ribose 1-phosphate. It catalyses the reaction guanosine + phosphate = alpha-D-ribose 1-phosphate + guanine. The enzyme catalyses inosine + phosphate = alpha-D-ribose 1-phosphate + hypoxanthine. The catalysed reaction is thymidine + phosphate = 2-deoxy-alpha-D-ribose 1-phosphate + thymine. It carries out the reaction uridine + phosphate = alpha-D-ribose 1-phosphate + uracil. It catalyses the reaction xanthosine + phosphate = alpha-D-ribose 1-phosphate + xanthine. In terms of biological role, catalyzes the phosphorolysis of diverse nucleosides, yielding D-ribose 1-phosphate and the respective free bases. Can use uridine, adenosine, guanosine, cytidine, thymidine, inosine and xanthosine as substrates. Also catalyzes the reverse reactions. The chain is Pyrimidine/purine nucleoside phosphorylase 1 from Psychrobacter cryohalolentis (strain ATCC BAA-1226 / DSM 17306 / VKM B-2378 / K5).